We begin with the raw amino-acid sequence, 210 residues long: MAVPQLYYFTIRGFGEYIRLLFLDNGIKFEDIRFDYEGNEWQEFKKGMLLGQLPCLKVDGQEIVQTGAIMRHLGRVHGLNGSNEQEATFLDMFFEGVRDVRMKYVRYIYYDEGTREDCVNKTIPEALVKLEELFKAHSGDFIIGNKISYADYILFEELDVYHVLDANILDKFPTLKSFWERMWKRPNLNAYLEKRKADKVWINAIEKGMN.

Residues 2–81 (AVPQLYYFTI…HLGRVHGLNG (80 aa)) form the GST N-terminal domain. Glutathione-binding positions include tyrosine 8, tryptophan 41, lysine 45, 52-53 (QL), and 65-66 (QT). The GST C-terminal domain maps to 83–200 (NEQEATFLDM…YLEKRKADKV (118 aa)).

The protein belongs to the GST superfamily. Pi family. Homodimer. Expressed in cells at the mouth and adjacent to the pharyngeal bulbs of the head and also in the tail.

It catalyses the reaction RX + glutathione = an S-substituted glutathione + a halide anion + H(+). Conjugation of reduced glutathione to a wide number of exogenous and endogenous hydrophobic electrophiles. Responsible for approximately one-third of 4-hydroxy-2-nonenal conjugation. May play a role in the detoxification of reactive oxygen species produced during pathogenic bacterial infection. In Caenorhabditis elegans, this protein is Glutathione S-transferase P 10.